A 314-amino-acid polypeptide reads, in one-letter code: 4-hydroxy-3-methylbut-2-enyl diphosphate reductase (314 aa).

[4Fe-4S] cluster is bound at residue Cys-12. Residues His-41 and His-74 each contribute to the (2E)-4-hydroxy-3-methylbut-2-enyl diphosphate site. His-41 and His-74 together coordinate dimethylallyl diphosphate. The isopentenyl diphosphate site is built by His-41 and His-74. Cys-96 contributes to the [4Fe-4S] cluster binding site. His-124 contributes to the (2E)-4-hydroxy-3-methylbut-2-enyl diphosphate binding site. Dimethylallyl diphosphate is bound at residue His-124. His-124 contacts isopentenyl diphosphate. Catalysis depends on Glu-126, which acts as the Proton donor. Thr-167 serves as a coordination point for (2E)-4-hydroxy-3-methylbut-2-enyl diphosphate. Residue Cys-197 participates in [4Fe-4S] cluster binding. The (2E)-4-hydroxy-3-methylbut-2-enyl diphosphate site is built by Ser-225, Ser-226, Asn-227, and Ser-269. Ser-225, Ser-226, Asn-227, and Ser-269 together coordinate dimethylallyl diphosphate. Residues Ser-225, Ser-226, Asn-227, and Ser-269 each coordinate isopentenyl diphosphate.

Belongs to the IspH family. It depends on [4Fe-4S] cluster as a cofactor.

It catalyses the reaction isopentenyl diphosphate + 2 oxidized [2Fe-2S]-[ferredoxin] + H2O = (2E)-4-hydroxy-3-methylbut-2-enyl diphosphate + 2 reduced [2Fe-2S]-[ferredoxin] + 2 H(+). The enzyme catalyses dimethylallyl diphosphate + 2 oxidized [2Fe-2S]-[ferredoxin] + H2O = (2E)-4-hydroxy-3-methylbut-2-enyl diphosphate + 2 reduced [2Fe-2S]-[ferredoxin] + 2 H(+). Its pathway is isoprenoid biosynthesis; dimethylallyl diphosphate biosynthesis; dimethylallyl diphosphate from (2E)-4-hydroxy-3-methylbutenyl diphosphate: step 1/1. It functions in the pathway isoprenoid biosynthesis; isopentenyl diphosphate biosynthesis via DXP pathway; isopentenyl diphosphate from 1-deoxy-D-xylulose 5-phosphate: step 6/6. Its function is as follows. Catalyzes the conversion of 1-hydroxy-2-methyl-2-(E)-butenyl 4-diphosphate (HMBPP) into a mixture of isopentenyl diphosphate (IPP) and dimethylallyl diphosphate (DMAPP). Acts in the terminal step of the DOXP/MEP pathway for isoprenoid precursor biosynthesis. In Actinobacillus pleuropneumoniae serotype 5b (strain L20), this protein is 4-hydroxy-3-methylbut-2-enyl diphosphate reductase.